Reading from the N-terminus, the 600-residue chain is MTDISKDRFLDALEGVGRPVATAEQIARELDCTQATAADALAALAADDEVERANVEPDPVVWYPRDWLELTDRERIVPFPDRREIIVDQPSQLTRAQLSRVAHLTDTTRTGSYRYEVRAEDVWAAPFDSLSDLVAAITELLPRDCPTLIEWVREQWTRATRFRLRTHDDGYVVLEAATDSLLGNVAEQKLDDDVLRAPISDTEAWVAAEQVAPLKRTLYEAGYPVRDDRDLESGEPLAVDLHLDLRPYQQDWVDRFEDASAGVLVGPPGSGKTVAAMGALESVGGETLVLVPSRELATQWREELLANTSLTGDQIGEYHGGEKRVRPVTIATYQTAGMDRHRHVFDDREWGLIVYDEVHHIPAEVARRSASLQSKHRLGLTATPVREDDKEADIYTLVGRPIGTDWDALFDAGFVAEPEVEIRYVPWRDDDDRYEYAAASGHTRRRLAAENPAKEAEIEHLVDQHGDTQALVFVDYLSQGERIAERLDAPFVNGETPHSRRETHFDQFRTGALDALVVSRIGDEGIDLPDAEFAVVASGLGGSRRQGAQRAGRTMRPGSQSLLFVLATRGTEEEDHARSRMRHLSTKGVRVTESDASHSP.

Positions 253 to 402 (VDRFEDASAG…DIYTLVGRPI (150 aa)) constitute a Helicase ATP-binding domain. Residue 266–273 (GPPGSGKT) participates in ATP binding. The DEAH box motif lies at 356-359 (DEVH). In terms of domain architecture, Helicase C-terminal spans 457-600 (EIEHLVDQHG…VTESDASHSP (144 aa)). The segment at 569-600 (RGTEEEDHARSRMRHLSTKGVRVTESDASHSP) is disordered. Basic and acidic residues predominate over residues 590 to 600 (RVTESDASHSP).

It belongs to the helicase family. RAD25/XPB subfamily.

It catalyses the reaction Couples ATP hydrolysis with the unwinding of duplex DNA by translocating in the 3'-5' direction.. The catalysed reaction is ATP + H2O = ADP + phosphate + H(+). This is Putative DNA 3'-5' helicase Rad25 from Halobacterium salinarum (strain ATCC 700922 / JCM 11081 / NRC-1) (Halobacterium halobium).